The primary structure comprises 356 residues: 5-formaminoimidazole-4-carboxamide-1-(beta)-D-ribofuranosyl 5'-monophosphate synthetase 2 (356 aa).

The 5-amino-1-(5-phospho-beta-D-ribosyl)imidazole-4-carboxamide site is built by His-27 and Ser-94. The 233-residue stretch at Arg-101 to Ser-333 folds into the ATP-grasp domain. ATP contacts are provided by residues Pro-145–Asp-196 and Glu-226. Position 255 (Asn-255) interacts with 5-amino-1-(5-phospho-beta-D-ribosyl)imidazole-4-carboxamide. Residues Glu-293 and Glu-306 each contribute to the Mg(2+) site.

It belongs to the phosphohexose mutase family. Mg(2+) is required as a cofactor. Requires Mn(2+) as cofactor.

It catalyses the reaction 5-amino-1-(5-phospho-beta-D-ribosyl)imidazole-4-carboxamide + formate + ATP = 5-formamido-1-(5-phospho-D-ribosyl)imidazole-4-carboxamide + ADP + phosphate. It participates in purine metabolism; IMP biosynthesis via de novo pathway; 5-formamido-1-(5-phospho-D-ribosyl)imidazole-4-carboxamide from 5-amino-1-(5-phospho-D-ribosyl)imidazole-4-carboxamide (formate route): step 1/1. Catalyzes the ATP- and formate-dependent formylation of 5-aminoimidazole-4-carboxamide-1-beta-d-ribofuranosyl 5'-monophosphate (AICAR) to 5-formaminoimidazole-4-carboxamide-1-beta-d-ribofuranosyl 5'-monophosphate (FAICAR) in the absence of folates. The sequence is that of 5-formaminoimidazole-4-carboxamide-1-(beta)-D-ribofuranosyl 5'-monophosphate synthetase 2 from Methanosarcina mazei (strain ATCC BAA-159 / DSM 3647 / Goe1 / Go1 / JCM 11833 / OCM 88) (Methanosarcina frisia).